Consider the following 308-residue polypeptide: Elongation factor Ts (308 aa).

Residues 80–83 (TDFV) are involved in Mg(2+) ion dislocation from EF-Tu.

It belongs to the EF-Ts family.

It is found in the cytoplasm. In terms of biological role, associates with the EF-Tu.GDP complex and induces the exchange of GDP to GTP. It remains bound to the aminoacyl-tRNA.EF-Tu.GTP complex up to the GTP hydrolysis stage on the ribosome. The polypeptide is Elongation factor Ts (Rhizobium johnstonii (strain DSM 114642 / LMG 32736 / 3841) (Rhizobium leguminosarum bv. viciae)).